The chain runs to 177 residues: Large ribosomal subunit protein uL6 (177 aa).

This sequence belongs to the universal ribosomal protein uL6 family. As to quaternary structure, part of the 50S ribosomal subunit.

In terms of biological role, this protein binds to the 23S rRNA, and is important in its secondary structure. It is located near the subunit interface in the base of the L7/L12 stalk, and near the tRNA binding site of the peptidyltransferase center. The sequence is that of Large ribosomal subunit protein uL6 from Bradyrhizobium sp. (strain ORS 278).